Reading from the N-terminus, the 322-residue chain is 5'-AMP-activated protein kinase subunit gamma (322 aa).

CBS domains follow at residues 37–97 (VSYR…NPDK), 118–181 (VDQL…CRET), 194–253 (ITQD…YNDL), and 262–322 (MRRS…LGSN). ADP is bound by residues Ile-42, Arg-146, 166-169 (TQYR), and Thr-195. AMP is bound by residues Thr-195, Lys-200, and 221-222 (SS). ATP-binding positions include Thr-195, Lys-200, and 221–222 (SS). Residues 221 to 222 (SS), 291 to 293 (RVH), and 309 to 312 (TLSD) each bind ADP. 309–312 (TLSD) provides a ligand contact to AMP. An ATP-binding site is contributed by 309-312 (TLSD).

The protein belongs to the 5'-AMP-activated protein kinase gamma subunit family. As to quaternary structure, AMPK is a heterotrimer of an alpha catalytic subunit (SNF1), a beta (SIP1, SIP2 or GAL83) and a gamma non-catalytic subunits (SNF4). Note=Interaction between SNF1 and SNF4 is inhibited by high levels of glucose.

The protein resides in the nucleus. It localises to the cytoplasm. Functionally, adenine nucleotides-binding subunit gamma of AMP-activated protein kinase (AMPK), an energy sensor protein kinase that plays a key role in regulating cellular energy metabolism. In response to reduction of intracellular ATP levels, AMPK activates energy-producing pathways and inhibits energy-consuming processes: inhibits protein, carbohydrate and lipid biosynthesis, as well as cell growth and proliferation. AMPK acts via direct phosphorylation of metabolic enzymes, and by longer-term effects via phosphorylation of transcription regulators. Gamma non-catalytic subunit mediates binding to AMP, ADP and ATP, leading to activate or inhibit AMPK: AMP-binding results in allosteric activation of alpha catalytic subunit (SNF1) both by inducing phosphorylation and preventing dephosphorylation of catalytic subunits. The polypeptide is 5'-AMP-activated protein kinase subunit gamma (SNF4) (Saccharomyces cerevisiae (strain ATCC 204508 / S288c) (Baker's yeast)).